A 117-amino-acid polypeptide reads, in one-letter code: uncharacterized protein (117 aa).

This is an uncharacterized protein from Pasteurella multocida (strain Pm70).